The sequence spans 389 residues: Phosphoglycerate kinase (389 aa).

Substrate contacts are provided by residues 21–23 (DLN), Arg36, 59–62 (HLGR), Arg112, and Arg145. ATP-binding positions include Lys196, Glu313, and 342-345 (GGDT).

It belongs to the phosphoglycerate kinase family. In terms of assembly, monomer.

The protein localises to the cytoplasm. The enzyme catalyses (2R)-3-phosphoglycerate + ATP = (2R)-3-phospho-glyceroyl phosphate + ADP. The protein operates within carbohydrate degradation; glycolysis; pyruvate from D-glyceraldehyde 3-phosphate: step 2/5. In Histophilus somni (strain 2336) (Haemophilus somnus), this protein is Phosphoglycerate kinase.